A 398-amino-acid chain; its full sequence is Fe-regulated protein 8 (398 aa).

Its function is as follows. Protein of unknown function; part of the gene cluster that mediates the biosynthesis of siderophore ferrichrome A which is contributing to organismal virulence. This Mycosarcoma maydis (Corn smut fungus) protein is Fe-regulated protein 8.